Reading from the N-terminus, the 321-residue chain is Acetyl-coenzyme A carboxylase carboxyl transferase subunit alpha (321 aa).

In terms of domain architecture, CoA carboxyltransferase C-terminal spans 39–293 (RLEVKSQALT…KRALAEALRQ (255 aa)).

This sequence belongs to the AccA family. Acetyl-CoA carboxylase is a heterohexamer composed of biotin carboxyl carrier protein (AccB), biotin carboxylase (AccC) and two subunits each of ACCase subunit alpha (AccA) and ACCase subunit beta (AccD).

It localises to the cytoplasm. The catalysed reaction is N(6)-carboxybiotinyl-L-lysyl-[protein] + acetyl-CoA = N(6)-biotinyl-L-lysyl-[protein] + malonyl-CoA. Its pathway is lipid metabolism; malonyl-CoA biosynthesis; malonyl-CoA from acetyl-CoA: step 1/1. In terms of biological role, component of the acetyl coenzyme A carboxylase (ACC) complex. First, biotin carboxylase catalyzes the carboxylation of biotin on its carrier protein (BCCP) and then the CO(2) group is transferred by the carboxyltransferase to acetyl-CoA to form malonyl-CoA. The protein is Acetyl-coenzyme A carboxylase carboxyl transferase subunit alpha of Azoarcus sp. (strain BH72).